Reading from the N-terminus, the 83-residue chain is Putative membrane protein insertion efficiency factor (83 aa).

Residues 63–83 are disordered; sequence GGNDPVPDHFSLRRNKTDISD. Residues 68–83 are compositionally biased toward basic and acidic residues; sequence VPDHFSLRRNKTDISD.

The protein belongs to the UPF0161 family.

It is found in the cell membrane. Its function is as follows. Could be involved in insertion of integral membrane proteins into the membrane. In Streptococcus agalactiae serotype III (strain NEM316), this protein is Putative membrane protein insertion efficiency factor.